Reading from the N-terminus, the 502-residue chain is Glycerol kinase (502 aa).

Residue Thr-13 coordinates ADP. Thr-13, Thr-14, and Ser-15 together coordinate ATP. Residue Thr-13 coordinates sn-glycerol 3-phosphate. Arg-17 serves as a coordination point for ADP. Sn-glycerol 3-phosphate contacts are provided by Arg-83, Glu-84, Tyr-136, and Asp-246. Glycerol contacts are provided by Arg-83, Glu-84, Tyr-136, Asp-246, and Gln-247. Thr-268 and Gly-311 together coordinate ADP. Residues Thr-268, Gly-311, Gln-315, and Gly-412 each coordinate ATP. The ADP site is built by Gly-412 and Asn-416.

Belongs to the FGGY kinase family.

The catalysed reaction is glycerol + ATP = sn-glycerol 3-phosphate + ADP + H(+). Its pathway is polyol metabolism; glycerol degradation via glycerol kinase pathway; sn-glycerol 3-phosphate from glycerol: step 1/1. Its activity is regulated as follows. Inhibited by fructose 1,6-bisphosphate (FBP). Functionally, key enzyme in the regulation of glycerol uptake and metabolism. Catalyzes the phosphorylation of glycerol to yield sn-glycerol 3-phosphate. The protein is Glycerol kinase of Francisella tularensis subsp. tularensis (strain WY96-3418).